A 505-amino-acid chain; its full sequence is 2,3-bisphosphoglycerate-independent phosphoglycerate mutase (505 aa).

Mn(2+)-binding residues include D12 and S62. Catalysis depends on S62, which acts as the Phosphoserine intermediate. Substrate contacts are provided by residues H123, 153–154, R185, R191, 257–260, and K330; these read RD and RPDR. The Mn(2+) site is built by D397, H401, D438, H439, and H456.

Belongs to the BPG-independent phosphoglycerate mutase family. As to quaternary structure, monomer. The cofactor is Mn(2+).

It carries out the reaction (2R)-2-phosphoglycerate = (2R)-3-phosphoglycerate. The protein operates within carbohydrate degradation; glycolysis; pyruvate from D-glyceraldehyde 3-phosphate: step 3/5. In terms of biological role, catalyzes the interconversion of 2-phosphoglycerate and 3-phosphoglycerate. The sequence is that of 2,3-bisphosphoglycerate-independent phosphoglycerate mutase from Staphylococcus aureus (strain COL).